A 495-amino-acid polypeptide reads, in one-letter code: Leucine aminopeptidase 2 (495 aa).

The N-terminal stretch at 1–21 is a signal peptide; that stretch reads MKSQLLSLAVAVSTISQGVVG. Residues 124–218 enclose the PA domain; that stretch reads PPANKIMAEL…EDGKNLASLV (95 aa). N-linked (GlcNAc...) asparagine glycans are attached at residues asparagine 142 and asparagine 235. Zn(2+) contacts are provided by histidine 259 and aspartate 271. N-linked (GlcNAc...) asparagine glycosylation is present at asparagine 272. Glutamate 303 serves as the catalytic Proton acceptor. Zn(2+) is bound by residues glutamate 304 and aspartate 332. Residue asparagine 352 is glycosylated (N-linked (GlcNAc...) asparagine). A Zn(2+)-binding site is contributed by histidine 430.

Belongs to the peptidase M28 family. M28A subfamily. In terms of assembly, monomer. Zn(2+) is required as a cofactor.

It is found in the secreted. In terms of biological role, extracellular aminopeptidase that releases a wide variety of amino acids from natural peptides and contributes to pathogenicity. In Trichophyton tonsurans (Scalp ringworm fungus), this protein is Leucine aminopeptidase 2 (LAP2).